Consider the following 295-residue polypeptide: Acetylglutamate kinase (295 aa).

Substrate-binding positions include 64 to 65 (GG), Arg-86, and Asn-190.

This sequence belongs to the acetylglutamate kinase family. ArgB subfamily.

Its subcellular location is the cytoplasm. It catalyses the reaction N-acetyl-L-glutamate + ATP = N-acetyl-L-glutamyl 5-phosphate + ADP. It functions in the pathway amino-acid biosynthesis; L-arginine biosynthesis; N(2)-acetyl-L-ornithine from L-glutamate: step 2/4. Functionally, catalyzes the ATP-dependent phosphorylation of N-acetyl-L-glutamate. The sequence is that of Acetylglutamate kinase from Pelotomaculum thermopropionicum (strain DSM 13744 / JCM 10971 / SI).